Consider the following 619-residue polypeptide: Chaperone protein HscA homolog (619 aa).

This sequence belongs to the heat shock protein 70 family.

Functionally, chaperone involved in the maturation of iron-sulfur cluster-containing proteins. Has a low intrinsic ATPase activity which is markedly stimulated by HscB. The protein is Chaperone protein HscA homolog of Pseudomonas paraeruginosa (strain DSM 24068 / PA7) (Pseudomonas aeruginosa (strain PA7)).